Here is a 321-residue protein sequence, read N- to C-terminus: Cytochrome c biogenesis protein CcsA (321 aa).

The next 7 membrane-spanning stretches (helical) occupy residues 17-37 (IISIVITIHLVTLLVHEIVGL), 43-63 (KGMIAAFFCITGLLVTRWIYS), 71-91 (LYESLMFLSWSFSIIHMVPKI), 143-163 (MLLSYAALLCGSLLSVALLVI), 225-245 (VISLGFTFLTIGILSGAVWAN), 258-273 (ETWAFITWTIFAIYLH), and 286-306 (AIVASMGFLIIWICYFGVNLL).

Belongs to the CcmF/CycK/Ccl1/NrfE/CcsA family. May interact with Ccs1.

Its subcellular location is the plastid. It localises to the chloroplast thylakoid membrane. In terms of biological role, required during biogenesis of c-type cytochromes (cytochrome c6 and cytochrome f) at the step of heme attachment. The protein is Cytochrome c biogenesis protein CcsA of Liriodendron tulipifera (Tuliptree).